We begin with the raw amino-acid sequence, 268 residues long: Myb-related protein 315 (268 aa).

2 HTH myb-type domains span residues 9 to 61 (KFGL…MNYL) and 62 to 116 (RPDL…KKKL). 2 DNA-binding regions (H-T-H motif) span residues 37–61 (WRVI…MNYL) and 89–112 (WSKI…NTHI).

As to expression, expressed in roots, stems, leaves, seed pods and flowers. Strongest expression in the stem.

The protein resides in the nucleus. Its function is as follows. Transcription factor. The sequence is that of Myb-related protein 315 from Antirrhinum majus (Garden snapdragon).